The primary structure comprises 105 residues: Large ribosomal subunit protein bL21 (105 aa).

It belongs to the bacterial ribosomal protein bL21 family. As to quaternary structure, part of the 50S ribosomal subunit. Contacts protein L20.

Its function is as follows. This protein binds to 23S rRNA in the presence of protein L20. This is Large ribosomal subunit protein bL21 from Dictyoglomus thermophilum (strain ATCC 35947 / DSM 3960 / H-6-12).